The primary structure comprises 520 residues: Bifunctional purine biosynthesis protein PurH (520 aa).

The MGS-like domain maps to 1–146 (MAPVALLSVS…KNHADVAVLT (146 aa)).

The protein belongs to the PurH family.

The enzyme catalyses (6R)-10-formyltetrahydrofolate + 5-amino-1-(5-phospho-beta-D-ribosyl)imidazole-4-carboxamide = 5-formamido-1-(5-phospho-D-ribosyl)imidazole-4-carboxamide + (6S)-5,6,7,8-tetrahydrofolate. It carries out the reaction IMP + H2O = 5-formamido-1-(5-phospho-D-ribosyl)imidazole-4-carboxamide. It functions in the pathway purine metabolism; IMP biosynthesis via de novo pathway; 5-formamido-1-(5-phospho-D-ribosyl)imidazole-4-carboxamide from 5-amino-1-(5-phospho-D-ribosyl)imidazole-4-carboxamide (10-formyl THF route): step 1/1. It participates in purine metabolism; IMP biosynthesis via de novo pathway; IMP from 5-formamido-1-(5-phospho-D-ribosyl)imidazole-4-carboxamide: step 1/1. The sequence is that of Bifunctional purine biosynthesis protein PurH from Synechococcus sp. (strain CC9902).